We begin with the raw amino-acid sequence, 700 residues long: Translation initiation factor IF-2 (700 aa).

The tract at residues 58-85 (KKEVKKQKEPSKEKGKSSEQVKVKEKSK) is disordered. The 175-residue stretch at 191–365 (PRPPVVTIMG…EMQEIRCIPD (175 aa)) folds into the tr-type G domain. The segment at 200-207 (GHVDHGKT) is G1. Residue 200 to 207 (GHVDHGKT) coordinates GTP. Residues 225 to 229 (GITQS) form a G2 region. A G3 region spans residues 246–249 (DTPG). GTP is bound by residues 246-250 (DTPGH) and 300-303 (NKID). Positions 300–303 (NKID) are G4. Residues 337–339 (SAK) are G5.

The protein belongs to the TRAFAC class translation factor GTPase superfamily. Classic translation factor GTPase family. IF-2 subfamily.

The protein resides in the cytoplasm. In terms of biological role, one of the essential components for the initiation of protein synthesis. Protects formylmethionyl-tRNA from spontaneous hydrolysis and promotes its binding to the 30S ribosomal subunits. Also involved in the hydrolysis of GTP during the formation of the 70S ribosomal complex. The sequence is that of Translation initiation factor IF-2 from Petrotoga mobilis (strain DSM 10674 / SJ95).